The following is a 106-amino-acid chain: Prothymosin alpha-B (106 aa).

Residues 1–39 (MADAKVDSATEISAKDLKEKKLIEEKENGKDATNGKENE) are compositionally biased toward basic and acidic residues. The tract at residues 1 to 106 (MADAKVDSAT…DVDPKKQKVN (106 aa)) is disordered. Ser8 carries the post-translational modification Phosphoserine. Thr10 bears the Phosphothreonine mark. Acidic residues-rich tracts occupy residues 40–76 (ENGEPEIDDEDDDEVDEDDEEGEGDEDEDEDDDDEDL) and 85–98 (DDDEDEDEDDEDDV).

Belongs to the pro/parathymosin family. Uniformly expressed in all embryonic cells at 4 and 8 hpf. At the 20-somite stage (18 hpf), ubiquitously expressed in the developing nervous system, in the tail bud and in the pronephric ducts. Also expressed in some placodes, including the anterior lateral line placode, otic vesicle and olfactory placode. At 27 hpf, strong expression persists in the central nervous system and the olfactory placode. Expressed strongly in the eyes and the pectoral fin buds. In the tail region, expressed in the spinal cord, in the posterior lateral line precursors, and persists in the pronephric ducts. At 48 hpf, expressed in all head territories including the developing brain, eyes, and pharyngeal arches. More caudally, expression persists in the pectoral fin buds, the spinal cord and, for the first time, appears in the intestine. At 72 hpf, expressed only in restricted regions of the brain, in pharyngeal arches region and in the amacrine cells and the horizontal cells of the retina.

Its subcellular location is the nucleus. This is Prothymosin alpha-B from Danio rerio (Zebrafish).